Consider the following 212-residue polypeptide: MQTAIIDYGMGNLHSVLKSVRTAGQLAGKNTKIFLSGDPDRVSRADKVIFPGQGAMPDCMAALTRGGLDEAVKDALKNKPFFGICVGAQLLFDHSEEGNTDGLGWFGGKVRRFARDLRDPQGCRLKVPHMGWNTVRQTQNHPLFQGIPQNTRFYFVHSYYFAPENPETILGESDYPSPFACIVGKDNVFATQFHTEKSHDAGLTMLKNFLNW.

In terms of domain architecture, Glutamine amidotransferase type-1 spans 2–212 (QTAIIDYGMG…LTMLKNFLNW (211 aa)). Residue Cys-85 is the Nucleophile of the active site. Residues His-194 and Glu-196 contribute to the active site.

Heterodimer of HisH and HisF.

Its subcellular location is the cytoplasm. The catalysed reaction is 5-[(5-phospho-1-deoxy-D-ribulos-1-ylimino)methylamino]-1-(5-phospho-beta-D-ribosyl)imidazole-4-carboxamide + L-glutamine = D-erythro-1-(imidazol-4-yl)glycerol 3-phosphate + 5-amino-1-(5-phospho-beta-D-ribosyl)imidazole-4-carboxamide + L-glutamate + H(+). It catalyses the reaction L-glutamine + H2O = L-glutamate + NH4(+). It participates in amino-acid biosynthesis; L-histidine biosynthesis; L-histidine from 5-phospho-alpha-D-ribose 1-diphosphate: step 5/9. In terms of biological role, IGPS catalyzes the conversion of PRFAR and glutamine to IGP, AICAR and glutamate. The HisH subunit catalyzes the hydrolysis of glutamine to glutamate and ammonia as part of the synthesis of IGP and AICAR. The resulting ammonia molecule is channeled to the active site of HisF. The sequence is that of Imidazole glycerol phosphate synthase subunit HisH from Neisseria gonorrhoeae (strain ATCC 700825 / FA 1090).